The chain runs to 97 residues: Co-chaperonin GroES (97 aa).

Belongs to the GroES chaperonin family. Heptamer of 7 subunits arranged in a ring. Interacts with the chaperonin GroEL.

Its subcellular location is the cytoplasm. In terms of biological role, together with the chaperonin GroEL, plays an essential role in assisting protein folding. The GroEL-GroES system forms a nano-cage that allows encapsulation of the non-native substrate proteins and provides a physical environment optimized to promote and accelerate protein folding. GroES binds to the apical surface of the GroEL ring, thereby capping the opening of the GroEL channel. This chain is Co-chaperonin GroES, found in Aeromonas hydrophila subsp. hydrophila (strain ATCC 7966 / DSM 30187 / BCRC 13018 / CCUG 14551 / JCM 1027 / KCTC 2358 / NCIMB 9240 / NCTC 8049).